Here is a 94-residue protein sequence, read N- to C-terminus: Integration host factor subunit beta (94 aa).

The protein belongs to the bacterial histone-like protein family. As to quaternary structure, heterodimer of an alpha and a beta chain.

In terms of biological role, this protein is one of the two subunits of integration host factor, a specific DNA-binding protein that functions in genetic recombination as well as in transcriptional and translational control. This Brucella anthropi (strain ATCC 49188 / DSM 6882 / CCUG 24695 / JCM 21032 / LMG 3331 / NBRC 15819 / NCTC 12168 / Alc 37) (Ochrobactrum anthropi) protein is Integration host factor subunit beta.